Consider the following 124-residue polypeptide: UPF0102 protein Mmc1_3298 (124 aa).

It belongs to the UPF0102 family.

The protein is UPF0102 protein Mmc1_3298 of Magnetococcus marinus (strain ATCC BAA-1437 / JCM 17883 / MC-1).